The sequence spans 238 residues: Probable rhamnogalacturonate lyase B (238 aa).

Residues 1 to 19 form the signal peptide; that stretch reads MRLRTSLGVASACASVASA. N-linked (GlcNAc...) asparagine glycosylation is found at Asn27, Asn110, and Asn143.

The protein belongs to the polysaccharide lyase 4 family.

Its subcellular location is the secreted. The enzyme catalyses Endotype eliminative cleavage of L-alpha-rhamnopyranosyl-(1-&gt;4)-alpha-D-galactopyranosyluronic acid bonds of rhamnogalacturonan I domains in ramified hairy regions of pectin leaving L-rhamnopyranose at the reducing end and 4-deoxy-4,5-unsaturated D-galactopyranosyluronic acid at the non-reducing end.. Functionally, pectinolytic enzymes consist of four classes of enzymes: pectin lyase, polygalacturonase, pectin methylesterase and rhamnogalacturonase. Degrades the rhamnogalacturonan I (RG-I) backbone of pectin. The chain is Probable rhamnogalacturonate lyase B (rglB) from Aspergillus oryzae (strain ATCC 42149 / RIB 40) (Yellow koji mold).